A 179-amino-acid polypeptide reads, in one-letter code: uncharacterized protein (179 aa).

In terms of domain architecture, Rhodanese spans 21-109 (QQDAVILVDV…WKQAGLPTVK (89 aa)). A run of 2 helical transmembrane segments spans residues 115-135 (ISIMRQVQIIAGSLVLTGVLL) and 138-158 (FVAPGFYFLSGFVGAGLLFAG).

The protein localises to the cell membrane. This is an uncharacterized protein from Synechocystis sp. (strain ATCC 27184 / PCC 6803 / Kazusa).